Consider the following 632-residue polypeptide: tRNA uridine 5-carboxymethylaminomethyl modification enzyme MnmG (632 aa).

Residue 13-18 (GGGHAG) coordinates FAD. 274 to 288 (GPRYCPSIEDKVMRF) provides a ligand contact to NAD(+).

It belongs to the MnmG family. In terms of assembly, homodimer. Heterotetramer of two MnmE and two MnmG subunits. The cofactor is FAD.

Its subcellular location is the cytoplasm. Functionally, NAD-binding protein involved in the addition of a carboxymethylaminomethyl (cmnm) group at the wobble position (U34) of certain tRNAs, forming tRNA-cmnm(5)s(2)U34. In Dichelobacter nodosus (strain VCS1703A), this protein is tRNA uridine 5-carboxymethylaminomethyl modification enzyme MnmG.